A 536-amino-acid chain; its full sequence is Ecdysone receptor (536 aa).

Residues 1–114 form a modulating region; that stretch reads MKTENLIVTT…GPVPRQQEEL (114 aa). Positions 77 to 107 are disordered; that stretch reads SPNSKLDDGNMSVHMGDGLDGKKSSSKKGPV. 2 consecutive NR C4-type zinc fingers follow at residues 115-135 and 151-175; these read CLVC…CEGC and CKFG…LKKC. The segment at residues 115-187 is a DNA-binding region (nuclear receptor); sequence CLVCGDRASG…VGMRPECVVP (73 aa). Residues 278 to 514 form the NR LBD domain; sequence NQVAVIYKLI…FLEEVWDVGD (237 aa).

This sequence belongs to the nuclear hormone receptor family. NR1 subfamily.

The protein localises to the nucleus. Functionally, receptor for ecdysone. Binds to ecdysone response elements (ECRES). In Chironomus tentans (Midge), this protein is Ecdysone receptor (EcR).